We begin with the raw amino-acid sequence, 254 residues long: Alcohol dehydrogenase (254 aa).

NAD(+) is bound at residue 10–33 (FVAGLGGIGLDTSRELVKRNLKNL). Residue S138 participates in substrate binding. The active-site Proton acceptor is the Y151.

The protein belongs to the short-chain dehydrogenases/reductases (SDR) family. As to quaternary structure, homodimer.

It catalyses the reaction a primary alcohol + NAD(+) = an aldehyde + NADH + H(+). The catalysed reaction is a secondary alcohol + NAD(+) = a ketone + NADH + H(+). This Drosophila pseudoobscura pseudoobscura (Fruit fly) protein is Alcohol dehydrogenase (Adh).